Consider the following 295-residue polypeptide: Shikimate dehydrogenase (NADP(+)) (295 aa).

Residues 22–24 (SLS) and Ser69 each bind shikimate. The active-site Proton acceptor is Lys73. 2 residues coordinate shikimate: Asn94 and Asp111. Residues 135–139 (GAGGA) and Val236 each bind NADP(+). Tyr238 contacts shikimate. Gly260 contributes to the NADP(+) binding site.

This sequence belongs to the shikimate dehydrogenase family. In terms of assembly, homodimer.

The catalysed reaction is shikimate + NADP(+) = 3-dehydroshikimate + NADPH + H(+). The protein operates within metabolic intermediate biosynthesis; chorismate biosynthesis; chorismate from D-erythrose 4-phosphate and phosphoenolpyruvate: step 4/7. In terms of biological role, involved in the biosynthesis of the chorismate, which leads to the biosynthesis of aromatic amino acids. Catalyzes the reversible NADPH linked reduction of 3-dehydroshikimate (DHSA) to yield shikimate (SA). The chain is Shikimate dehydrogenase (NADP(+)) from Streptococcus uberis (strain ATCC BAA-854 / 0140J).